The sequence spans 64 residues: Large ribosomal subunit protein bL35 (64 aa).

It belongs to the bacterial ribosomal protein bL35 family.

This is Large ribosomal subunit protein bL35 from Chloroherpeton thalassium (strain ATCC 35110 / GB-78).